The following is a 432-amino-acid chain: uncharacterized protein (432 aa).

2 SIS domains span residues 105-244 (WLTE…DLVS) and 277-422 (CDKK…VDLP).

This is an uncharacterized protein from Saccharomyces cerevisiae (strain Lalvin EC1118 / Prise de mousse) (Baker's yeast).